Here is a 458-residue protein sequence, read N- to C-terminus: RuvB-like helicase 1 (458 aa).

Positions 1 to 29 (MVQISEVKGNSRDNRTAAHTHIKGLGLRP) are disordered. 71-78 (GGPGTGKT) is an ATP binding site.

It belongs to the RuvB family. In terms of assembly, may form heterododecamers with RVB2. Component of the SWR1 chromatin remodeling complex, the INO80 chromatin remodeling complex, and of the R2TP complex.

Its subcellular location is the nucleus. It carries out the reaction ATP + H2O = ADP + phosphate + H(+). DNA helicase which participates in several chromatin remodeling complexes, including the SWR1 and the INO80 complexes. The SWR1 complex mediates the ATP-dependent exchange of histone H2A for the H2A variant HZT1 leading to transcriptional regulation of selected genes by chromatin remodeling. The INO80 complex remodels chromatin by shifting nucleosomes and is involved in DNA repair. Also involved in pre-rRNA processing. The chain is RuvB-like helicase 1 (rvb1) from Emericella nidulans (strain FGSC A4 / ATCC 38163 / CBS 112.46 / NRRL 194 / M139) (Aspergillus nidulans).